Consider the following 213-residue polypeptide: AN1-type zinc finger protein 5 (213 aa).

An A20-type zinc finger spans residues threonine 8–glutamine 42. Cysteine 14, cysteine 18, cysteine 30, and cysteine 33 together coordinate Zn(2+). Positions glutamine 39 to proline 149 are disordered. Residues arginine 40–asparagine 75 show a composition bias toward polar residues. Serine 48 and serine 58 each carry phosphoserine. The segment covering serine 120–glutamine 138 has biased composition (low complexity). Residues serine 139–lysine 148 are compositionally biased toward basic and acidic residues. The segment at lysine 148–alanine 194 adopts an AN1-type zinc-finger fold. Zn(2+) is bound by residues cysteine 154, cysteine 157, cysteine 168, cysteine 170, cysteine 175, histidine 178, histidine 184, and cysteine 186. Position 209 is an N6-acetyllysine (lysine 209).

In terms of assembly, interacts with ubiquitin and polyubiquitinated proteins. Identified in a heterotrimeric complex with ubiquitin and SQSTM1, where ZFAND5 and SQSTM1 both interact with the same ubiquitin molecule. Homooligomer and/or heterooligomer. Interacts (via A20-type domain) with IKBKG and RIPK1 and with TRAF6 (via AN1-type domain). As to expression, highly expressed in skeletal muscle. Expressed in fetal cochlea. Also expressed in infant brain, fetal heart, pancreatic islet, melanocyte, pineal gland, placenta, corneal stroma, and parathyroid tumor. Weakly expressed or undetectable in adult brain, heart, colon, thymus, spleen, kidney, liver, small intestine, placenta, lung and peripheral blood leukocytes. Expressed in rhabdomyosarcoma RD cells (at protein level).

It localises to the cytoplasm. Its function is as follows. Involved in protein degradation via the ubiquitin-proteasome system. May act by anchoring ubiquitinated proteins to the proteasome. Plays a role in ubiquitin-mediated protein degradation during muscle atrophy. Plays a role in the regulation of NF-kappa-B activation and apoptosis. Inhibits NF-kappa-B activation triggered by overexpression of RIPK1 and TRAF6 but not of RELA. Also inhibits tumor necrosis factor (TNF), IL-1 and TLR4-induced NF-kappa-B activation in a dose-dependent manner. Overexpression sensitizes cells to TNF-induced apoptosis. Is a potent inhibitory factor for osteoclast differentiation. The protein is AN1-type zinc finger protein 5 (ZFAND5) of Homo sapiens (Human).